We begin with the raw amino-acid sequence, 89 residues long: Small ribosomal subunit protein uS15 (89 aa).

The protein belongs to the universal ribosomal protein uS15 family. As to quaternary structure, part of the 30S ribosomal subunit. Forms a bridge to the 50S subunit in the 70S ribosome, contacting the 23S rRNA.

One of the primary rRNA binding proteins, it binds directly to 16S rRNA where it helps nucleate assembly of the platform of the 30S subunit by binding and bridging several RNA helices of the 16S rRNA. In terms of biological role, forms an intersubunit bridge (bridge B4) with the 23S rRNA of the 50S subunit in the ribosome. The chain is Small ribosomal subunit protein uS15 from Pelodictyon phaeoclathratiforme (strain DSM 5477 / BU-1).